Consider the following 729-residue polypeptide: Hydroxamate siderophore receptor FhuE (729 aa).

Positions 1-36 are cleaved as a signal peptide; sequence MLSTQFNRDNQYQAITKPSLLAGCIALALLPSAAFA. The TonB box motif lies at 42-49; sequence ETVIVEGS. The disordered stretch occupies residues 48 to 72; the sequence is GSATAPDDGENDYSVTSTSAGTKMQ. Residues 60–72 show a composition bias toward polar residues; it reads YSVTSTSAGTKMQ. The 110-residue stretch at 74–183 folds into the TBDR plug domain; it reads TQRDIPQSVT…PSAAINMVRK (110 aa). Fe(III)-coprogen is bound by residues Arg-117, Arg-142, Trp-275, Tyr-357, Asn-373, and Trp-416. The TBDR beta-barrel domain maps to 189–729; that stretch reads EFKGDVSAEY…NFSITGTYQF (541 aa). Residues 712–729 carry the TonB C-terminal box motif; that stretch reads SIVYGTPRNFSITGTYQF.

It belongs to the TonB-dependent receptor family.

It localises to the cell outer membrane. In terms of biological role, involved in the active transport across the outer membrane of iron complexed with linear hydroxamate siderophores coprogen, rhodotorulic acid and ferrioxamine B. Binds Fe-coprogen with high affinity, rhodotorulic acid to a lesser extent, and weakly to ferrioxamine B. Selective for planar siderophores. Does not use cyclic siderophores ferrichrome nor ferrioxamine E as substrates. The protein is Hydroxamate siderophore receptor FhuE of Escherichia coli (strain K12).